Reading from the N-terminus, the 283-residue chain is MTARQIQLGDITFANDRPFALLGGVNVLEDLDFALRCAGHYKQVCERLGIPLVFKASYDKANRSSIHSFRGPGLEAGLQILQAVKDTLGIPVITDVHSPEEAKAAAKVADIIQLPAFLARQTDLVRAMAETGAVINIKKPQFLSPEQIRNIVDKFRECGNEQLLICERGTNFGYDNLVVDMLGFGVMKRTCDDLPLIFDVTHALQCRDPGGAASGGRRSQVVDLAKAGMAVGLAGLFLEAHPDPNQARCDGPSALPLDQLEPFLTQVKAIDDLVKSQPMININ.

The protein belongs to the KdsA family.

The protein localises to the cytoplasm. The enzyme catalyses D-arabinose 5-phosphate + phosphoenolpyruvate + H2O = 3-deoxy-alpha-D-manno-2-octulosonate-8-phosphate + phosphate. It participates in carbohydrate biosynthesis; 3-deoxy-D-manno-octulosonate biosynthesis; 3-deoxy-D-manno-octulosonate from D-ribulose 5-phosphate: step 2/3. The protein operates within bacterial outer membrane biogenesis; lipopolysaccharide biosynthesis. This is 2-dehydro-3-deoxyphosphooctonate aldolase from Parasynechococcus marenigrum (strain WH8102).